A 419-amino-acid polypeptide reads, in one-letter code: Serine hydroxymethyltransferase (419 aa).

Residues L118 and 122–124 (GHL) each bind (6S)-5,6,7,8-tetrahydrofolate. Residue K226 is modified to N6-(pyridoxal phosphate)lysine. Residue E242 coordinates (6S)-5,6,7,8-tetrahydrofolate.

This sequence belongs to the SHMT family. As to quaternary structure, homodimer. Pyridoxal 5'-phosphate serves as cofactor.

It localises to the cytoplasm. The catalysed reaction is (6R)-5,10-methylene-5,6,7,8-tetrahydrofolate + glycine + H2O = (6S)-5,6,7,8-tetrahydrofolate + L-serine. It functions in the pathway one-carbon metabolism; tetrahydrofolate interconversion. The protein operates within amino-acid biosynthesis; glycine biosynthesis; glycine from L-serine: step 1/1. Catalyzes the reversible interconversion of serine and glycine with tetrahydrofolate (THF) serving as the one-carbon carrier. This reaction serves as the major source of one-carbon groups required for the biosynthesis of purines, thymidylate, methionine, and other important biomolecules. Also exhibits THF-independent aldolase activity toward beta-hydroxyamino acids, producing glycine and aldehydes, via a retro-aldol mechanism. In Metamycoplasma arthritidis (strain 158L3-1) (Mycoplasma arthritidis), this protein is Serine hydroxymethyltransferase.